The primary structure comprises 341 residues: Probable GDP-mannose transporter 2 (341 aa).

Topologically, residues 1 to 11 (MSKHKHEWTES) are cytoplasmic. The helical transmembrane segment at 12-32 (VANSGPASILSYCASSILMTV) threads the bilayer. The Lumenal portion of the chain corresponds to 33–46 (TNKFVVNLDNFNMN). A helical transmembrane segment spans residues 47-67 (FVMLFVQSLVCTVTLCILRIV). The Cytoplasmic segment spans residues 68 to 85 (GVANFRSLNRTDVKNWFP). Residues 86 to 106 (ISLLLVLMIYTSLKSLQYLAV) traverse the membrane as a helical segment. Residue Pro-107 is a topological domain, lumenal. A helical membrane pass occupies residues 108–128 (IYTIFKNLTIILIAYGEVLFF). The Cytoplasmic portion of the chain corresponds to 129-139 (GGKVTSMELTS). The helical transmembrane segment at 140-160 (FIMMVLSSVVATWGDQQAIAI) threads the bilayer. Topologically, residues 161–176 (KASSLEDLDQELVEST) are lumenal. The helical transmembrane segment at 177-197 (IFVLNPGYLWMFTNCISSALF) threads the bilayer. Topologically, residues 198 to 214 (VLIMRKRIRLTNFKDYD) are cytoplasmic. Residues 215–235 (TMFYNNVLALPLLLVFSFIME) form a helical membrane-spanning segment. The Lumenal segment spans residues 236–251 (DWSTKNLSVNLSADSL). Residues Asn-241 and Asn-245 are each glycosylated (N-linked (GlcNAc...) asparagine). The chain crosses the membrane as a helical span at residues 252 to 272 (AAMVISGLMSVGISYCSGWCV). At 273–278 (RVTSST) the chain is on the cytoplasmic side. Residues 279-299 (TYSMVGALNKLPIALAGLVFF) traverse the membrane as a helical segment. The Lumenal portion of the chain corresponds to 300–303 (DAPK). The chain crosses the membrane as a helical span at residues 304 to 324 (NFLSFFSIFLGFLSGLLYAVA). Residues 325–341 (KQKKIQQQKVLAATLEK) are Cytoplasmic-facing.

It belongs to the TPT transporter family. SLC35D subfamily.

The protein resides in the golgi apparatus membrane. It localises to the cytoplasmic vesicle membrane. It is found in the endoplasmic reticulum membrane. In terms of biological role, involved in the import of GDP-mannose from the cytoplasm into the Golgi lumen. The chain is Probable GDP-mannose transporter 2 (HVG1) from Saccharomyces cerevisiae (strain Lalvin EC1118 / Prise de mousse) (Baker's yeast).